Reading from the N-terminus, the 651-residue chain is Acetyl-coenzyme A synthetase (651 aa).

CoA is bound by residues 191-194 (RGGK), threonine 311, and asparagine 335. Residues 387 to 389 (GEP), 411 to 416 (DTWWQT), aspartate 500, and arginine 515 contribute to the ATP site. Serine 523 contacts CoA. Position 526 (arginine 526) interacts with ATP. 3 residues coordinate Mg(2+): valine 537, histidine 539, and valine 542. Position 584 (arginine 584) interacts with CoA. Lysine 609 is subject to N6-acetyllysine.

This sequence belongs to the ATP-dependent AMP-binding enzyme family. Mg(2+) serves as cofactor. Post-translationally, acetylated. Deacetylation by the SIR2-homolog deacetylase activates the enzyme.

It catalyses the reaction acetate + ATP + CoA = acetyl-CoA + AMP + diphosphate. Catalyzes the conversion of acetate into acetyl-CoA (AcCoA), an essential intermediate at the junction of anabolic and catabolic pathways. AcsA undergoes a two-step reaction. In the first half reaction, AcsA combines acetate with ATP to form acetyl-adenylate (AcAMP) intermediate. In the second half reaction, it can then transfer the acetyl group from AcAMP to the sulfhydryl group of CoA, forming the product AcCoA. In Pseudomonas syringae pv. syringae (strain B728a), this protein is Acetyl-coenzyme A synthetase.